Here is a 143-residue protein sequence, read N- to C-terminus: Root meristem growth factor 10 (143 aa).

The N-terminal stretch at Met-1–Ser-27 is a signal peptide. Residues Arg-28 to Leu-130 constitute a propeptide that is removed on maturation. Residue Asn-60 is glycosylated (N-linked (GlcNAc...) asparagine). Over residues Asn-74–Gly-83 the composition is skewed to polar residues. Residues Asn-74–Asn-143 form a disordered region. The Nuclear localization signal signature appears at Val-92–Lys-99. The residue at position 132 (Tyr-132) is a Sulfotyrosine. A Hydroxyproline modification is found at Pro-140.

This sequence belongs to the RGF family. In terms of assembly, binds to LRR receptor-like serine/threonine-protein kinases RGI1, RGI2 and RGI3 to trigger their dimerization with SERK proteins and subsequent signaling. Post-translationally, the tyrosine sulfation is critical for the function of the peptide. In terms of tissue distribution, expressed in root tips.

The protein localises to the secreted. It is found in the nucleus. In terms of biological role, maintains the postembryonic root stem cell niche by regulating the expression levels and patterns of the transcription factor PLETHORA (PLT), mainly at the post-transcriptional level. Promotes root elongation. The protein is Root meristem growth factor 10 of Arabidopsis thaliana (Mouse-ear cress).